We begin with the raw amino-acid sequence, 490 residues long: Cytochrome P450 2C29 (490 aa).

The N-terminal stretch at 1-25 is a signal peptide; the sequence is MDLVVFLALTLSCLILLSLWRQSSG. K249, K252, and K375 each carry N6-acetyllysine. C435 is a heme binding site.

Belongs to the cytochrome P450 family. Requires heme as cofactor. As to expression, expressed in liver as well as in extrahepatic tissues including brain, kidney, lung, heart, and intestine.

The protein resides in the endoplasmic reticulum membrane. It localises to the microsome membrane. It catalyses the reaction an organic molecule + reduced [NADPH--hemoprotein reductase] + O2 = an alcohol + oxidized [NADPH--hemoprotein reductase] + H2O + H(+). The enzyme catalyses (5Z,8Z,11Z,14Z)-eicosatetraenoate + reduced [NADPH--hemoprotein reductase] + O2 = 14,15-epoxy-(5Z,8Z,11Z)-eicosatrienoate + oxidized [NADPH--hemoprotein reductase] + H2O + H(+). It participates in lipid metabolism; arachidonate metabolism. Functionally, a cytochrome P450 monooxygenase that selectively catalyzes the epoxidation of 14,15 double bond of (5Z,8Z,11Z,14Z)-eicosatetraenoic acid (arachidonate) forming 14,15-epoxyeicosatrienoic acid (14,15-EET) regioisomer. Mechanistically, uses molecular oxygen inserting one oxygen atom into a substrate, and reducing the second into a water molecule, with two electrons provided by NADPH via cytochrome P450 reductase (CPR; NADPH--hemoprotein reductase). The sequence is that of Cytochrome P450 2C29 from Mus musculus (Mouse).